A 305-amino-acid chain; its full sequence is Homoserine O-acetyltransferase (305 aa).

The active-site Acyl-thioester intermediate is the Cys142. Substrate is bound by residues Lys163 and Ser192. His235 acts as the Proton acceptor in catalysis. Glu237 is a catalytic residue. Arg249 serves as a coordination point for substrate.

The protein belongs to the MetA family.

It is found in the cytoplasm. The enzyme catalyses L-homoserine + acetyl-CoA = O-acetyl-L-homoserine + CoA. It functions in the pathway amino-acid biosynthesis; L-methionine biosynthesis via de novo pathway; O-acetyl-L-homoserine from L-homoserine: step 1/1. Functionally, transfers an acetyl group from acetyl-CoA to L-homoserine, forming acetyl-L-homoserine. In Dinoroseobacter shibae (strain DSM 16493 / NCIMB 14021 / DFL 12), this protein is Homoserine O-acetyltransferase.